The following is a 548-amino-acid chain: MKKVTAMLFSMAVGLNAVSMAAKAKASEEQETDVLLIGGGIMSATLGTYLRELEPEWSMTMVERLEGVAQESSNGWNNAGTGHSALMELNYTPQNADGSISIEKAVAINEAFQISRQFWAHQVERGVLRTPRSFINTVPHMSFVWGEDNVNFLRARYAALQQSSLFRGMRYSEDHAQIKEWAPLVMEGRDPQQKVAATRTEIGTDVNYGEITRQLIASLQKKSNFSLQLSSEVRALKRNDDNTWTVTVADLKNGTAQNIRAKFVFIGAGGAALKLLQESGIPEAKDYAGFPVGGQFLVSENPDVVNHHLAKVYGKASVGAPPMSVPHIDTRVLDGKRVVLFGPFATFSTKFLKNGSLWDLMSSTTTSNVMPMMHVGLDNFDLVKYLVSQVMLSEEDRFEALKEYYPQAKKEDWRLWQAGQRVQIIKRDAEKGGVLRLGTEVVSDQQGTIAALLGASPGASTAAPIMLNLLEKVFGDRVSSPQWQATLKAIVPSYGRKLNGDVAATERELQYTSEVLGLKYDKPQAADSTPKPQLKPQPVQKEVADIAL.

A disordered region spans residues 521–548; the sequence is DKPQAADSTPKPQLKPQPVQKEVADIAL. Low complexity predominate over residues 530–541; sequence PKPQLKPQPVQK.

It belongs to the MQO family. It depends on FAD as a cofactor.

The enzyme catalyses (S)-malate + a quinone = a quinol + oxaloacetate. It functions in the pathway carbohydrate metabolism; tricarboxylic acid cycle; oxaloacetate from (S)-malate (quinone route): step 1/1. The chain is Probable malate:quinone oxidoreductase from Escherichia coli O17:K52:H18 (strain UMN026 / ExPEC).